A 231-amino-acid chain; its full sequence is Orotidine 5'-phosphate decarboxylase (231 aa).

Substrate-binding positions include Asp-11, Lys-33, 60-69, Thr-120, Arg-181, Gln-190, Gly-210, and Arg-211; that span reads DLKFHDIPNT. Residue Lys-62 is the Proton donor of the active site.

It belongs to the OMP decarboxylase family. Type 1 subfamily. In terms of assembly, homodimer.

The catalysed reaction is orotidine 5'-phosphate + H(+) = UMP + CO2. Its pathway is pyrimidine metabolism; UMP biosynthesis via de novo pathway; UMP from orotate: step 2/2. Catalyzes the decarboxylation of orotidine 5'-monophosphate (OMP) to uridine 5'-monophosphate (UMP). This Photobacterium profundum (strain SS9) protein is Orotidine 5'-phosphate decarboxylase.